Consider the following 342-residue polypeptide: Holliday junction branch migration complex subunit RuvB (342 aa).

Residues 1 to 184 (MDNERVITAV…FGIVQRLEFY (184 aa)) form a large ATPase domain (RuvB-L) region. Residues isoleucine 23, arginine 24, glycine 65, lysine 68, threonine 69, threonine 70, 131–133 (EDY), arginine 174, tyrosine 184, and arginine 221 each bind ATP. Mg(2+) is bound at residue threonine 69. Positions 185 to 255 (SVDDLSGIVS…IAQRALDMLE (71 aa)) are small ATPAse domain (RuvB-S). Positions 258-342 (SCGLDGTDRR…PRQDGDLFND (85 aa)) are head domain (RuvB-H). Residues arginine 313 and arginine 318 each coordinate DNA.

This sequence belongs to the RuvB family. In terms of assembly, homohexamer. Forms an RuvA(8)-RuvB(12)-Holliday junction (HJ) complex. HJ DNA is sandwiched between 2 RuvA tetramers; dsDNA enters through RuvA and exits via RuvB. An RuvB hexamer assembles on each DNA strand where it exits the tetramer. Each RuvB hexamer is contacted by two RuvA subunits (via domain III) on 2 adjacent RuvB subunits; this complex drives branch migration. In the full resolvosome a probable DNA-RuvA(4)-RuvB(12)-RuvC(2) complex forms which resolves the HJ.

The protein resides in the cytoplasm. It catalyses the reaction ATP + H2O = ADP + phosphate + H(+). Its function is as follows. The RuvA-RuvB-RuvC complex processes Holliday junction (HJ) DNA during genetic recombination and DNA repair, while the RuvA-RuvB complex plays an important role in the rescue of blocked DNA replication forks via replication fork reversal (RFR). RuvA specifically binds to HJ cruciform DNA, conferring on it an open structure. The RuvB hexamer acts as an ATP-dependent pump, pulling dsDNA into and through the RuvAB complex. RuvB forms 2 homohexamers on either side of HJ DNA bound by 1 or 2 RuvA tetramers; 4 subunits per hexamer contact DNA at a time. Coordinated motions by a converter formed by DNA-disengaged RuvB subunits stimulates ATP hydrolysis and nucleotide exchange. Immobilization of the converter enables RuvB to convert the ATP-contained energy into a lever motion, pulling 2 nucleotides of DNA out of the RuvA tetramer per ATP hydrolyzed, thus driving DNA branch migration. The RuvB motors rotate together with the DNA substrate, which together with the progressing nucleotide cycle form the mechanistic basis for DNA recombination by continuous HJ branch migration. Branch migration allows RuvC to scan DNA until it finds its consensus sequence, where it cleaves and resolves cruciform DNA. This chain is Holliday junction branch migration complex subunit RuvB, found in Alcanivorax borkumensis (strain ATCC 700651 / DSM 11573 / NCIMB 13689 / SK2).